A 181-amino-acid chain; its full sequence is MQNEVQQALAAFSARYCEAWRQQRGSLPVSEEYIGISSPCIVSTHPDAVEWEPQPFTPEDSLGAVEKALDIVIQPDVHAFYASQYAGDMAARYDDVALTLLQAWSQDDFRRVQENLIGHLVTQKRLKLSPTIFIATLDSELDVISLCNLTGEVVQETLGTRKRRVLAPSLSTFLSQLTPLV.

It belongs to the Syd family.

The protein localises to the cell inner membrane. Functionally, interacts with the SecY protein in vivo. May bind preferentially to an uncomplexed state of SecY, thus functioning either as a chelating agent for excess SecY in the cell or as a regulatory factor that negatively controls the translocase function. The polypeptide is Protein Syd (Cronobacter sakazakii (strain ATCC BAA-894) (Enterobacter sakazakii)).